We begin with the raw amino-acid sequence, 1297 residues long: Protein ENHANCED DOWNY MILDEW 2 (1297 aa).

A PHD-type 1; degenerate zinc finger spans residues 222 to 281 (ESVCAICDNGGEILCCEGSCLRSFHATKKDGEDSLCDSLGFNKMQVEAIQKYFCPNCEHK). Zn(2+) is bound by residues cysteine 237, cysteine 241, cysteine 275, cysteine 278, cysteine 285, cysteine 288, cysteine 306, cysteine 311, histidine 316, cysteine 319, cysteine 346, and histidine 349. A PHD-type 2; atypical zinc finger spans residues 282-352 (IHQCFICKNL…EYTCPLHKCS (71 aa)). The segment at 351–417 (CSVCENGEVK…RVLIYCQEHE (67 aa)) adopts a PHD-type 3; degenerate zinc-finger fold. The Nuclear localization signal 1 motif lies at 445–452 (QRRILESH). 2 disordered regions span residues 471-547 (CGKA…ARDA) and 562-598 (TQEPNPVKPGRVIPVDSKHNKTDSIASKEPGSEIPTL). A compositionally biased stretch (low complexity) spans 475–487 (SKNSFRSSFPSSK). The Nuclear localization signal 2 signature appears at 492 to 499 (TKKHGLVS). The segment covering 526–547 (KMMEDSREAGKNKLGVKEARDA) has biased composition (basic and acidic residues). Short sequence motifs (nuclear localization signal) lie at residues 610–617 (MKKATEEI) and 979–986 (LKKEGKTK). Basic and acidic residues-rich tracts occupy residues 969–990 (QSDHLSRRSQLKKEGKTKDYSG) and 1096–1109 (EVSRDRPSSVRTSR). Disordered regions lie at residues 969–1017 (QSDH…GELS), 1085–1109 (HGCKVQGTGKPEVSRDRPSSVRTSR), and 1260–1297 (FPLPPPPPSDFEMSPRGFAPGPNPNYPYMSRSGGWIND).

Interacts with WNK8 in nucleus; this interaction is involved in developmental processes regulation but not in RPP7-dependent disease resistance. Interacts with EML1 and EML2 in nucleus. Component of the ASI1-AIPP1-EDM2 (AAE) RNA regulatory complex composed of at least AIPP1/EDM3, ASI1 and EDM2 and may contain CPL2, AIPP2 and AIPP3/BDT1. Binds directly to AIPP1/EDM3. Co-associates with AIPP1/EDM3 to histone H3 lysine 9 dimethylation (H3K9me2)-marked chromatin and transcripts at a critical proximal polyadenylation site of RPP7 to hamper proximal transcript polyadeylation/termination. Post-translationally, phosphorylated by WNK8.

It is found in the nucleus. Cellular antisilencing factor and regulator of genome DNA methylation patterns involved in the regulation of chromatin states. Together with SUVH4, monitors repressive epigenetic marks H3K27me1, H3K9me2, and prevents DNA-methylation at CHG sites, affecting especially the expression of transposons and developmentally important genes. Collaboratively with ASI1 and AIPP1/EDM3, the AAE complex regulates alternative RNA processing (e.g. alternative splicing) and epigenetic silencing (e.g. H3K9me2) of intronic heterochromatin-containing genes as well as genic heterochromatin-containing genes by promoting distal 3' polyadenylation. Epigenetic reader that binds DNA and contributes to transcriptional transposable element (TE) silencing by modulating levels of the repressive post-translational histone modifications (PHM) H3K9me2. In cv. Columbia, required for RPP7-dependent disease resistance against the Hyaloperonospora arabidopsidis isolate Hiks1, by promoting levels of RPP7 via alternative polyadenylation (APA), resulting from cooption of epigenetic information at the TE insertion locus COPIA-R7. Exhibits a global role in NLR (nucleotide-binding, leucine-rich repeat) defense genes epigenetic (e.g. H3K9me2 hallmarks) expression control; promotes the accumulation of RPP7, RPP4 and some other proteins, but mediates the repression of several other NLR products, probably to compensate for fitness penalties caused by defense mechanisms. Regulates development processes such as the formation of leaf pavement cells, leaf expansion, fertility and flowering. Prevents FLC accumulation to control flowering. Modulates stomatal development by regulating the methylation-mediated silencing of ERECTA receptor genes (e.g. ER, ERL1 and ERL2) and preventing cell divisions. The chain is Protein ENHANCED DOWNY MILDEW 2 from Arabidopsis thaliana (Mouse-ear cress).